The primary structure comprises 179 residues: Guanosine-3',5'-bis(diphosphate) 3'-pyrophosphohydrolase MESH1 (179 aa).

At Gly2 the chain carries N-acetylglycine. N6-acetyllysine is present on Lys25. The region spanning 32–127 (YINHPIGVAR…VKLADKLYNL (96 aa)) is the HD domain. 3 residues coordinate Mn(2+): His35, His61, and Asp62. Active-site nucleophile residues include Glu65 and Asp66. The residue at position 97 (Lys97) is an N6-acetyllysine. Residue Asp122 coordinates Mn(2+). Residue Lys123 is modified to N6-acetyllysine.

Belongs to the MESH1 family. Mn(2+) is required as a cofactor.

The catalysed reaction is guanosine 3',5'-bis(diphosphate) + H2O = GDP + diphosphate + H(+). Its function is as follows. ppGpp hydrolyzing enzyme involved in starvation response. The sequence is that of Guanosine-3',5'-bis(diphosphate) 3'-pyrophosphohydrolase MESH1 (HDDC3) from Homo sapiens (Human).